The sequence spans 115 residues: Cell division topological specificity factor (115 aa).

The segment at 93 to 115 is disordered; it reads QLKEPKNQSELDSPETEGTDQKS. Positions 104 to 115 are enriched in acidic residues; sequence DSPETEGTDQKS.

This sequence belongs to the MinE family.

Its function is as follows. Prevents the cell division inhibition by proteins MinC and MinD at internal division sites while permitting inhibition at polar sites. This ensures cell division at the proper site by restricting the formation of a division septum at the midpoint of the long axis of the cell. This is Cell division topological specificity factor from Prochlorococcus marinus (strain NATL1A).